Reading from the N-terminus, the 775-residue chain is Mitochondrial intermediate peptidase (775 aa).

A mitochondrion-targeting transit peptide spans 1-28; the sequence is MIARPARDVLSSATKKQFRFRGCLAARH. His558 contacts Zn(2+). Glu559 is a catalytic residue. Zn(2+)-binding residues include His562 and His565.

The protein belongs to the peptidase M3 family. Requires Zn(2+) as cofactor.

It is found in the mitochondrion matrix. It catalyses the reaction Release of an N-terminal octapeptide as second stage of processing of some proteins imported into the mitochondrion.. Functionally, cleaves proteins, imported into the mitochondrion, to their mature size. While most mitochondrial precursor proteins are processed to the mature form in one step by mitochondrial processing peptidase (MPP), the sequential cleavage by MIP of an octapeptide after initial processing by MPP is a required step for a subgroup of nuclear-encoded precursor proteins destined for the matrix or the inner membrane. The chain is Mitochondrial intermediate peptidase (OCT1) from Schizophyllum commune (Split gill fungus).